Here is a 73-residue protein sequence, read N- to C-terminus: Putative membrane protein insertion efficiency factor (73 aa).

It belongs to the UPF0161 family.

It localises to the cell inner membrane. In terms of biological role, could be involved in insertion of integral membrane proteins into the membrane. This is Putative membrane protein insertion efficiency factor from Neisseria meningitidis serogroup C / serotype 2a (strain ATCC 700532 / DSM 15464 / FAM18).